The following is a 324-amino-acid chain: Mitochondrial oxaloacetate transport protein (324 aa).

Solcar repeat units follow at residues 20–111, 126–218, and 227–312; these read ISKF…IRSS, QSVG…AKNI, and DGPA…TMKL. The next 6 membrane-spanning stretches (helical) occupy residues 26–46, 79–99, 132–152, 193–213, 233–253, and 284–305; these read FVAGGLAACIAVTVTNPIELI, GIKGLQKGLNAAYIYQIGLNG, VFSGAASGIIGAVIGSPLFLV, GIDAAILRTGAGSSVQLPIYN, LTASTISGLGVAVVMNPWDVI, and LYKGFAAQVFRIAPHTIMCLTF.

This sequence belongs to the mitochondrial carrier (TC 2.A.29) family.

The protein resides in the mitochondrion inner membrane. The catalysed reaction is a dicarboxylate(in) + sulfate(out) = a dicarboxylate(out) + sulfate(in). The enzyme catalyses (2S)-2-isopropylmalate(in) + sulfate(out) = (2S)-2-isopropylmalate(out) + sulfate(in). It carries out the reaction (2R,3S)-3-isopropylmalate(in) + sulfate(out) = (2R,3S)-3-isopropylmalate(out) + sulfate(in). It catalyses the reaction malonate(in) + sulfate(out) = malonate(out) + sulfate(in). The catalysed reaction is oxaloacetate(in) + sulfate(out) = oxaloacetate(out) + sulfate(in). The enzyme catalyses thiosulfate(in) + sulfate(out) = thiosulfate(out) + sulfate(in). With respect to regulation, inhibited by alpha-keto isocaproate, an intermediate of leucine biosynthesis pathway. Functionally, antiporter that exchanges dicarboxylates and sulfur oxoanions across the inner membrane of mitochondria. Exports alpha-isopropylmalate from mitochondrial matrix to the cytosol, where it serves as a precursor for leucine biosynthesis. The polypeptide is Mitochondrial oxaloacetate transport protein (OAC1) (Saccharomyces cerevisiae (strain ATCC 204508 / S288c) (Baker's yeast)).